Here is a 118-residue protein sequence, read N- to C-terminus: Small ribosomal subunit protein uS13 (118 aa).

Positions Ser-94–Lys-118 are disordered.

Belongs to the universal ribosomal protein uS13 family. As to quaternary structure, part of the 30S ribosomal subunit. Forms a loose heterodimer with protein S19. Forms two bridges to the 50S subunit in the 70S ribosome.

In terms of biological role, located at the top of the head of the 30S subunit, it contacts several helices of the 16S rRNA. In the 70S ribosome it contacts the 23S rRNA (bridge B1a) and protein L5 of the 50S subunit (bridge B1b), connecting the 2 subunits; these bridges are implicated in subunit movement. Contacts the tRNAs in the A and P-sites. This chain is Small ribosomal subunit protein uS13, found in Shewanella sp. (strain W3-18-1).